A 429-amino-acid polypeptide reads, in one-letter code: Serine hydroxymethyltransferase (429 aa).

Residues L126 and 130–132 (GHL) contribute to the (6S)-5,6,7,8-tetrahydrofolate site. K235 carries the N6-(pyridoxal phosphate)lysine modification. A (6S)-5,6,7,8-tetrahydrofolate-binding site is contributed by 359–361 (SPF).

It belongs to the SHMT family. As to quaternary structure, homodimer. Pyridoxal 5'-phosphate is required as a cofactor.

The protein localises to the cytoplasm. It catalyses the reaction (6R)-5,10-methylene-5,6,7,8-tetrahydrofolate + glycine + H2O = (6S)-5,6,7,8-tetrahydrofolate + L-serine. It participates in one-carbon metabolism; tetrahydrofolate interconversion. Its pathway is amino-acid biosynthesis; glycine biosynthesis; glycine from L-serine: step 1/1. In terms of biological role, catalyzes the reversible interconversion of serine and glycine with tetrahydrofolate (THF) serving as the one-carbon carrier. This reaction serves as the major source of one-carbon groups required for the biosynthesis of purines, thymidylate, methionine, and other important biomolecules. Also exhibits THF-independent aldolase activity toward beta-hydroxyamino acids, producing glycine and aldehydes, via a retro-aldol mechanism. The protein is Serine hydroxymethyltransferase of Synechococcus sp. (strain WH7803).